The chain runs to 349 residues: S-adenosylmethionine:tRNA ribosyltransferase-isomerase (349 aa).

Belongs to the QueA family. Monomer.

Its subcellular location is the cytoplasm. The catalysed reaction is 7-aminomethyl-7-carbaguanosine(34) in tRNA + S-adenosyl-L-methionine = epoxyqueuosine(34) in tRNA + adenine + L-methionine + 2 H(+). It functions in the pathway tRNA modification; tRNA-queuosine biosynthesis. Functionally, transfers and isomerizes the ribose moiety from AdoMet to the 7-aminomethyl group of 7-deazaguanine (preQ1-tRNA) to give epoxyqueuosine (oQ-tRNA). The chain is S-adenosylmethionine:tRNA ribosyltransferase-isomerase from Pseudomonas fluorescens (strain SBW25).